Reading from the N-terminus, the 971-residue chain is Xylanolytic transcriptional activator xlnR (971 aa).

Disordered stretches follow at residues M1 to M25 and G55 to R123. A compositionally biased stretch (low complexity) spans F9–S18. Residues L67–F96 show a composition bias toward polar residues. Residues C129–C155 constitute a DNA-binding region (zn(2)-C6 fungal-type). Composition is skewed to polar residues over residues N182–S199, N227–D241, and Q249–S260. 3 disordered regions span residues N182–G263, L295–S316, and R580–P610.

This sequence belongs to the xlnR/xlr1 family.

The protein localises to the nucleus. Transcriptional activator of the xylanolytic system. Involved in the regulation of extracellular cellulolytic and xylanolytic genes and in the regulation of the intracellular activities of D-xylose catabolic genes in the pentose catabolic pathway (PCP) in response to the presence of D-xylose. This chain is Xylanolytic transcriptional activator xlnR (xlnR), found in Aspergillus flavus (strain ATCC 200026 / FGSC A1120 / IAM 13836 / NRRL 3357 / JCM 12722 / SRRC 167).